We begin with the raw amino-acid sequence, 883 residues long: Chromatin structure-remodeling complex protein RSC30 (883 aa).

The zn(2)-C6 fungal-type DNA-binding region spans 14 to 45; it reads ACTQCRKRKIGCDRAKPICGNCVKYNKPDCFY. Disordered regions lie at residues 121–157 and 241–273; these read QNNN…DVPS and NTTA…TSRT. Over residues 130–149 the composition is skewed to polar residues; that stretch reads APRQNSSTVSSNVHGNTIVR. Phosphoserine is present on Ser150. The segment covering 241–251 has biased composition (polar residues); that stretch reads NTTANKINKTG. Residues 252–270 show a composition bias toward basic and acidic residues; sequence ENSKKGKVDGKRAGFDHQT.

In terms of assembly, forms a heteromer with RSC3. Interacts with NPL6. Component of the two forms of the RSC complex composed of at least either RSC1 or RSC2, and ARP7, ARP9, LDB7, NPL6, RSC3, RSC30, RSC4, RSC58, RSC6, RSC8, RSC9, SFH1, STH1, HTL1 and probably RTT102. The complexes interact with histone and histone variant components of centromeric chromatin. Component of a fungal-specific module (HTL1-LDB7-NPL6-RSC3-RSC30) within the RSC complex.

It is found in the nucleus. Functionally, component of the chromatin structure-remodeling complex (RSC), which is involved in transcription regulation and nucleosome positioning. RSC is responsible for the transfer of a histone octamer from a nucleosome core particle to naked DNA. The reaction requires ATP and involves an activated RSC-nucleosome intermediate. Remodeling reaction also involves DNA translocation, DNA twist and conformational change. As a reconfigurer of centromeric and flanking nucleosomes, RSC complex is required both for proper kinetochore function in chromosome segregation and, via a PKC1-dependent signaling pathway, for organization of the cellular cytoskeleton. This subunit is required for transcription of ribosomal protein genes and genes involved in the integrity of the cell wall. Together with HTL1, LDB7, NPL6, RSC3 components, defines a fungal-specific module within the RSC complex that plays a role in many cellular functions including the maintenance of cell wall integrity. This Saccharomyces cerevisiae (strain ATCC 204508 / S288c) (Baker's yeast) protein is Chromatin structure-remodeling complex protein RSC30 (RSC30).